Here is a 33-residue protein sequence, read N- to C-terminus: Glutaminase-asparaginase (33 aa).

The Asparaginase/glutaminase domain occupies asparagine 1–lysine 33. The active-site Acyl-ester intermediate is the threonine 10.

The protein belongs to the asparaginase 1 family. As to quaternary structure, homotetramer.

It is found in the periplasm. The enzyme catalyses L-glutamine + H2O = L-glutamate + NH4(+). It catalyses the reaction L-asparagine + H2O = L-aspartate + NH4(+). The polypeptide is Glutaminase-asparaginase (ansB) (Delftia acidovorans (Pseudomonas acidovorans)).